Consider the following 265-residue polypeptide: Mycothiol acetyltransferase (265 aa).

N-acetyltransferase domains follow at residues methionine 1–proline 110 and valine 118–glycine 265. Aspartate 3 provides a ligand contact to 1D-myo-inositol 2-(L-cysteinylamino)-2-deoxy-alpha-D-glucopyranoside. Valine 44 to valine 46 serves as a coordination point for acetyl-CoA. Glutamate 145, arginine 185, and glutamate 198 together coordinate 1D-myo-inositol 2-(L-cysteinylamino)-2-deoxy-alpha-D-glucopyranoside. Acetyl-CoA contacts are provided by residues leucine 202–valine 204 and histidine 209–lysine 215. Tyrosine 236 is a binding site for 1D-myo-inositol 2-(L-cysteinylamino)-2-deoxy-alpha-D-glucopyranoside.

The protein belongs to the acetyltransferase family. MshD subfamily. As to quaternary structure, monomer.

The enzyme catalyses 1D-myo-inositol 2-(L-cysteinylamino)-2-deoxy-alpha-D-glucopyranoside + acetyl-CoA = mycothiol + CoA + H(+). In terms of biological role, catalyzes the transfer of acetyl from acetyl-CoA to desacetylmycothiol (Cys-GlcN-Ins) to form mycothiol. This is Mycothiol acetyltransferase from Segniliparus rotundus (strain ATCC BAA-972 / CDC 1076 / CIP 108378 / DSM 44985 / JCM 13578).